A 167-amino-acid chain; its full sequence is Small ribosomal subunit protein uS5 (167 aa).

An S5 DRBM domain is found at 12–75; that stretch reads LEERVVTINR…EDAKKNMVFV (64 aa).

Belongs to the universal ribosomal protein uS5 family. In terms of assembly, part of the 30S ribosomal subunit. Contacts proteins S4 and S8.

In terms of biological role, with S4 and S12 plays an important role in translational accuracy. Its function is as follows. Located at the back of the 30S subunit body where it stabilizes the conformation of the head with respect to the body. This Listeria innocua serovar 6a (strain ATCC BAA-680 / CLIP 11262) protein is Small ribosomal subunit protein uS5.